The following is a 105-amino-acid chain: Cytochrome c-553-like (105 aa).

Positions 1–29 are cleaved as a signal peptide; that stretch reads MAGIVSLVILAVALFSFMNFDPYVSQVLA. Heme c contacts are provided by C45, C48, H49, and M85.

In terms of processing, binds 1 heme c group covalently per subunit.

This is Cytochrome c-553-like (cytM) from Synechocystis sp. (strain ATCC 27184 / PCC 6803 / Kazusa).